Here is a 287-residue protein sequence, read N- to C-terminus: Hydroxysteroid 11-beta-dehydrogenase 1-like protein (287 aa).

Positions M1 to A15 are cleaved as a signal peptide. NADP(+) contacts are provided by residues G36–T62, D87–M88, and N114–L116. S165 contributes to the substrate binding site. Y178 acts as the Proton acceptor in catalysis. NADP(+) is bound by residues Y178 to K182 and G211 to S217. An N-linked (GlcNAc...) asparagine glycan is attached at N280.

The protein belongs to the short-chain dehydrogenases/reductases (SDR) family.

The protein resides in the secreted. It catalyses the reaction cortisone + NADPH + H(+) = cortisol + NADP(+). Functionally, unidirectional NADP(+)-dependent cortisol dehydrogenase (in vitro). The protein is Hydroxysteroid 11-beta-dehydrogenase 1-like protein (HSD11B1L) of Bos taurus (Bovine).